A 342-amino-acid polypeptide reads, in one-letter code: MRSTKVIHIVGCHAEGEVGDVIVGGVAPPPGETVWEQSRFIANDETLRNFVLNKPRGGVFRHVNLLVPPKDPRAQMGFIIMEPADTPPMSGSNSICVSTVLLDSGIIAMQEPVTHMVLEAPGGIIEVEAECRNGKAERISVRNVPSFADRLDAPLDVTGLGTIMVDTAYGGDSFVIVDAAQIGMKIEPGQARELAEIGVKITKAANEQLGFRHPERDWRHISFCQITEPVTREGDVLTGVNTVAIRPAKFDRSPTGTGCSARMAVLHAKGQMKAGERFIGKSVLGTEFHCRLDKVLELGGKPAISPIISGRAWVTGTSQLMLDPSDPFPHGYRLSDTWPRDE.

S90 (proton acceptor) is an active-site residue. Residues 91–92 (GS), D251, and 256–257 (GT) each bind substrate.

The protein belongs to the proline racemase family. As to quaternary structure, homotetramer.

It catalyses the reaction trans-4-hydroxy-L-proline = cis-4-hydroxy-D-proline. Its function is as follows. In vitro, catalyzes the epimerization of trans-4-hydroxy-L-proline (t4LHyp) to cis-4-hydroxy-D-proline (c4DHyp) and that of trans-3-hydroxy-L-proline (t3LHyp) to cis-3-hydroxy-D-proline (c3DHyp), albeit with very low efficiency. The physiological substrate may be different. Displays neither proline racemase activity nor t3LHyp dehydratase activity. This Brucella melitensis biotype 1 (strain ATCC 23456 / CCUG 17765 / NCTC 10094 / 16M) protein is Protein BMEI1586.